Here is a 569-residue protein sequence, read N- to C-terminus: Urease subunit beta (569 aa).

The Urease domain occupies 131–569 (GGIDTHIHFI…VSLAQLFSIF (439 aa)). Ni(2+) contacts are provided by His136, His138, and Lys219. Lys219 bears the N6-carboxylysine mark. His221 contacts substrate. Ni(2+)-binding residues include His248 and His274. His322 functions as the Proton donor in the catalytic mechanism. Asp362 serves as a coordination point for Ni(2+).

It belongs to the metallo-dependent hydrolases superfamily. Urease alpha subunit family. Heterohexamer of 3 UreA (alpha) and 3 UreB (beta) subunits. Requires Ni cation as cofactor. Carboxylation allows a single lysine to coordinate two nickel ions.

The protein localises to the cytoplasm. It catalyses the reaction urea + 2 H2O + H(+) = hydrogencarbonate + 2 NH4(+). It participates in nitrogen metabolism; urea degradation; CO(2) and NH(3) from urea (urease route): step 1/1. This Helicobacter pylori (strain Shi470) protein is Urease subunit beta.